The sequence spans 450 residues: Exodeoxyribonuclease 7 large subunit (450 aa).

The protein belongs to the XseA family. As to quaternary structure, heterooligomer composed of large and small subunits.

It is found in the cytoplasm. It carries out the reaction Exonucleolytic cleavage in either 5'- to 3'- or 3'- to 5'-direction to yield nucleoside 5'-phosphates.. In terms of biological role, bidirectionally degrades single-stranded DNA into large acid-insoluble oligonucleotides, which are then degraded further into small acid-soluble oligonucleotides. In Listeria welshimeri serovar 6b (strain ATCC 35897 / DSM 20650 / CCUG 15529 / CIP 8149 / NCTC 11857 / SLCC 5334 / V8), this protein is Exodeoxyribonuclease 7 large subunit.